The chain runs to 144 residues: 3-hydroxyacyl-[acyl-carrier-protein] dehydratase FabZ (144 aa).

Histidine 51 is a catalytic residue.

Belongs to the thioester dehydratase family. FabZ subfamily.

The protein resides in the cytoplasm. It catalyses the reaction a (3R)-hydroxyacyl-[ACP] = a (2E)-enoyl-[ACP] + H2O. Involved in unsaturated fatty acids biosynthesis. Catalyzes the dehydration of short chain beta-hydroxyacyl-ACPs and long chain saturated and unsaturated beta-hydroxyacyl-ACPs. The chain is 3-hydroxyacyl-[acyl-carrier-protein] dehydratase FabZ from Clostridium botulinum (strain ATCC 19397 / Type A).